Reading from the N-terminus, the 96-residue chain is (4S)-4-hydroxy-5-phosphonooxypentane-2,3-dione isomerase (96 aa).

One can recognise an ABM domain in the interval 2–91 (HVTLVEINVK…MTGPRKKTTF (90 aa)).

It belongs to the LsrG family. Homodimer.

It is found in the cytoplasm. It catalyses the reaction (2S)-2-hydroxy-3,4-dioxopentyl phosphate = 3-hydroxy-2,4-dioxopentyl phosphate. Functionally, involved in the degradation of phospho-AI-2, thereby terminating induction of the lsr operon and closing the AI-2 signaling cycle. Catalyzes the conversion of (4S)-4-hydroxy-5-phosphonooxypentane-2,3-dione (P-DPD) to 3-hydroxy-5-phosphonooxypentane-2,4-dione (P-HPD). The protein is (4S)-4-hydroxy-5-phosphonooxypentane-2,3-dione isomerase of Yersinia enterocolitica serotype O:8 / biotype 1B (strain NCTC 13174 / 8081).